The following is a 247-amino-acid chain: Granulin (247 aa).

The protein belongs to the polyhedrin family.

Component of the virus occlusion bodies, which are large proteinaceous structures, that protect the virus from the outside environment for extended periods until they are ingested by insect larvae. In Agrotis segetum granulosis virus (AsGV), this protein is Granulin.